Consider the following 196-residue polypeptide: Probable GTP-binding protein EngB (196 aa).

The EngB-type G domain occupies 24–196 (ELSEVALSGR…IWNLIEPYIS (173 aa)). GTP is bound by residues 32 to 39 (GRSNVGKS), 59 to 63 (GKTQT), 77 to 80 (DVPG), 144 to 147 (TKED), and 176 to 178 (YSS). Residues S39 and T61 each contribute to the Mg(2+) site.

Belongs to the TRAFAC class TrmE-Era-EngA-EngB-Septin-like GTPase superfamily. EngB GTPase family. The cofactor is Mg(2+).

Functionally, necessary for normal cell division and for the maintenance of normal septation. The polypeptide is Probable GTP-binding protein EngB (Staphylococcus aureus (strain Mu3 / ATCC 700698)).